Consider the following 376-residue polypeptide: Succinyl-diaminopimelate desuccinylase (376 aa).

Position 66 (His-66) interacts with Zn(2+). Asp-68 is a catalytic residue. Asp-99 contacts Zn(2+). Residue Glu-133 is the Proton acceptor of the active site. Positions 134, 162, and 348 each coordinate Zn(2+).

This sequence belongs to the peptidase M20A family. DapE subfamily. As to quaternary structure, homodimer. Zn(2+) serves as cofactor. The cofactor is Co(2+).

It catalyses the reaction N-succinyl-(2S,6S)-2,6-diaminopimelate + H2O = (2S,6S)-2,6-diaminopimelate + succinate. Its pathway is amino-acid biosynthesis; L-lysine biosynthesis via DAP pathway; LL-2,6-diaminopimelate from (S)-tetrahydrodipicolinate (succinylase route): step 3/3. In terms of biological role, catalyzes the hydrolysis of N-succinyl-L,L-diaminopimelic acid (SDAP), forming succinate and LL-2,6-diaminopimelate (DAP), an intermediate involved in the bacterial biosynthesis of lysine and meso-diaminopimelic acid, an essential component of bacterial cell walls. The polypeptide is Succinyl-diaminopimelate desuccinylase (Xanthomonas oryzae pv. oryzae (strain PXO99A)).